Consider the following 269-residue polypeptide: tRNA pseudouridine synthase A (269 aa).

Residue aspartate 51 is the Nucleophile of the active site. Tyrosine 109 is a binding site for substrate.

It belongs to the tRNA pseudouridine synthase TruA family. In terms of assembly, homodimer.

The catalysed reaction is uridine(38/39/40) in tRNA = pseudouridine(38/39/40) in tRNA. In terms of biological role, formation of pseudouridine at positions 38, 39 and 40 in the anticodon stem and loop of transfer RNAs. The protein is tRNA pseudouridine synthase A of Histophilus somni (strain 2336) (Haemophilus somnus).